We begin with the raw amino-acid sequence, 490 residues long: Cytochrome P450 71D11 (490 aa).

Heme is bound at residue Cys427.

It belongs to the cytochrome P450 family. The cofactor is heme.

The polypeptide is Cytochrome P450 71D11 (CYP71D11) (Lotus japonicus (Lotus corniculatus var. japonicus)).